Here is a 405-residue protein sequence, read N- to C-terminus: Probable tRNA sulfurtransferase (405 aa).

The region spanning Asp-60 to Leu-165 is the THUMP domain. Residues Met-183 to Leu-184, His-208 to Phe-209, Arg-265, Gly-287, and Gln-296 each bind ATP.

Belongs to the ThiI family.

It is found in the cytoplasm. It catalyses the reaction [ThiI sulfur-carrier protein]-S-sulfanyl-L-cysteine + a uridine in tRNA + 2 reduced [2Fe-2S]-[ferredoxin] + ATP + H(+) = [ThiI sulfur-carrier protein]-L-cysteine + a 4-thiouridine in tRNA + 2 oxidized [2Fe-2S]-[ferredoxin] + AMP + diphosphate. The enzyme catalyses [ThiS sulfur-carrier protein]-C-terminal Gly-Gly-AMP + S-sulfanyl-L-cysteinyl-[cysteine desulfurase] + AH2 = [ThiS sulfur-carrier protein]-C-terminal-Gly-aminoethanethioate + L-cysteinyl-[cysteine desulfurase] + A + AMP + 2 H(+). The protein operates within cofactor biosynthesis; thiamine diphosphate biosynthesis. In terms of biological role, catalyzes the ATP-dependent transfer of a sulfur to tRNA to produce 4-thiouridine in position 8 of tRNAs, which functions as a near-UV photosensor. Also catalyzes the transfer of sulfur to the sulfur carrier protein ThiS, forming ThiS-thiocarboxylate. This is a step in the synthesis of thiazole, in the thiamine biosynthesis pathway. The sulfur is donated as persulfide by IscS. This is Probable tRNA sulfurtransferase from Lactobacillus gasseri (strain ATCC 33323 / DSM 20243 / BCRC 14619 / CIP 102991 / JCM 1131 / KCTC 3163 / NCIMB 11718 / NCTC 13722 / AM63).